The following is a 288-amino-acid chain: Orotidine 5'-phosphate decarboxylase (288 aa).

Residue K97 is the Proton donor of the active site.

Belongs to the OMP decarboxylase family. Type 2 subfamily.

The enzyme catalyses orotidine 5'-phosphate + H(+) = UMP + CO2. The protein operates within pyrimidine metabolism; UMP biosynthesis via de novo pathway; UMP from orotate: step 2/2. The chain is Orotidine 5'-phosphate decarboxylase from Clostridium tetani (strain Massachusetts / E88).